We begin with the raw amino-acid sequence, 340 residues long: GTP 3',8-cyclase (340 aa).

In terms of domain architecture, Radical SAM core spans 8-227 (KLGRPIRDLR…SMIQEEFDIE (220 aa)). Residue Arg-17 participates in GTP binding. The [4Fe-4S] cluster site is built by Cys-24 and Cys-28. Tyr-30 provides a ligand contact to S-adenosyl-L-methionine. Residue Cys-31 coordinates [4Fe-4S] cluster. Arg-71 serves as a coordination point for GTP. An S-adenosyl-L-methionine-binding site is contributed by Gly-75. Thr-102 contributes to the GTP binding site. An S-adenosyl-L-methionine-binding site is contributed by Ser-126. GTP is bound at residue Lys-163. Met-197 is a binding site for S-adenosyl-L-methionine. Residues Cys-261 and Cys-264 each contribute to the [4Fe-4S] cluster site. Position 266–268 (266–268 (RAR)) interacts with GTP. Position 278 (Cys-278) interacts with [4Fe-4S] cluster.

This sequence belongs to the radical SAM superfamily. MoaA family. In terms of assembly, monomer and homodimer. The cofactor is [4Fe-4S] cluster.

It catalyses the reaction GTP + AH2 + S-adenosyl-L-methionine = (8S)-3',8-cyclo-7,8-dihydroguanosine 5'-triphosphate + 5'-deoxyadenosine + L-methionine + A + H(+). The protein operates within cofactor biosynthesis; molybdopterin biosynthesis. Its function is as follows. Catalyzes the cyclization of GTP to (8S)-3',8-cyclo-7,8-dihydroguanosine 5'-triphosphate. In Staphylococcus carnosus (strain TM300), this protein is GTP 3',8-cyclase.